Here is a 578-residue protein sequence, read N- to C-terminus: L-ascorbate oxidase (578 aa).

A signal peptide spans 1 to 28 (MASLGFLFFFLLPLILLELSSSRSVMAA). Plastocyanin-like domains lie at 30–149 (TRHF…LIVE) and 161–328 (DGEF…NYLP). 4 residues coordinate Cu cation: H87, H89, H131, and H133. Disulfide bonds link C108–C565 and C207–C221. N206 is a glycosylation site (N-linked (GlcNAc...) asparagine). Residues N349, N394, N438, and N451 are each glycosylated (N-linked (GlcNAc...) asparagine). The 179-residue stretch at 372–550 (HRRIILLNTQ…HMGMGVIFAE (179 aa)) folds into the Plastocyanin-like 3 domain. Positions 472, 475, 477, 533, 534, 535, 539, and 544 each coordinate Cu cation.

The protein belongs to the multicopper oxidase family. As to quaternary structure, dimer. Cu cation serves as cofactor. As to expression, highly expressed in young and growing tissues.

The protein resides in the secreted. The enzyme catalyses 4 L-ascorbate + O2 = 4 monodehydro-L-ascorbate radical + 2 H2O. Functionally, may be involved in a redox system involving ascorbic acid. The polypeptide is L-ascorbate oxidase (AAO) (Nicotiana tabacum (Common tobacco)).